The sequence spans 183 residues: Putative 3-methyladenine DNA glycosylase (183 aa).

Belongs to the DNA glycosylase MPG family.

The protein is Putative 3-methyladenine DNA glycosylase of Wolbachia pipientis subsp. Culex pipiens (strain wPip).